The chain runs to 284 residues: Sulfotransferase 4A1 (284 aa).

Residues Thr8, Thr11, and Thr205 each carry the phosphothreonine modification.

It belongs to the sulfotransferase 1 family. As to expression, expressed in brain, cerebellum and hypothalamus. Not detected in pancreas, liver, lung, intestine, kidney, uterus, adrenal gland, thymus, spleen, epididymis, testicle, and heart.

The protein resides in the cytoplasm. Atypical sulfotransferase family member with very low affinity for 3'-phospho-5'-adenylyl sulfate (PAPS) and very low catalytic activity towards L-triiodothyronine, thyroxine, estrone, p-nitrophenol, 2-naphthylamine, and 2-beta-naphthol. May have a role in the metabolism of drugs and neurotransmitters in the CNS. The chain is Sulfotransferase 4A1 (Sult4a1) from Mus musculus (Mouse).